A 166-amino-acid chain; its full sequence is Protein-export protein SecB (166 aa).

This sequence belongs to the SecB family. In terms of assembly, homotetramer, a dimer of dimers. One homotetramer interacts with 1 SecA dimer.

Its subcellular location is the cytoplasm. Functionally, one of the proteins required for the normal export of preproteins out of the cell cytoplasm. It is a molecular chaperone that binds to a subset of precursor proteins, maintaining them in a translocation-competent state. It also specifically binds to its receptor SecA. The chain is Protein-export protein SecB from Roseobacter denitrificans (strain ATCC 33942 / OCh 114) (Erythrobacter sp. (strain OCh 114)).